The chain runs to 153 residues: Small ribosomal subunit protein uS17 (153 aa).

Belongs to the universal ribosomal protein uS17 family.

In Anopheles gambiae (African malaria mosquito), this protein is Small ribosomal subunit protein uS17 (RpS11).